The primary structure comprises 130 residues: Large ribosomal subunit protein eL32 (130 aa).

The protein belongs to the eukaryotic ribosomal protein eL32 family. As to quaternary structure, part of the 50S ribosomal subunit.

The sequence is that of Large ribosomal subunit protein eL32 from Pyrococcus furiosus (strain ATCC 43587 / DSM 3638 / JCM 8422 / Vc1).